Reading from the N-terminus, the 293-residue chain is Glycine--tRNA ligase alpha subunit (293 aa).

Belongs to the class-II aminoacyl-tRNA synthetase family. In terms of assembly, tetramer of two alpha and two beta subunits.

It is found in the cytoplasm. The catalysed reaction is tRNA(Gly) + glycine + ATP = glycyl-tRNA(Gly) + AMP + diphosphate. This Aliarcobacter butzleri (strain RM4018) (Arcobacter butzleri) protein is Glycine--tRNA ligase alpha subunit.